Here is a 173-residue protein sequence, read N- to C-terminus: Translationally-controlled tumor protein homolog (173 aa).

One can recognise a TCTP domain in the interval 1 to 173; that stretch reads MIIYKDILTG…WKHGLEEYKV (173 aa).

This sequence belongs to the TCTP family.

The protein resides in the cytoplasm. Its subcellular location is the cytoskeleton. Functionally, involved in protein synthesis. Involved in microtubule stabilization. The protein is Translationally-controlled tumor protein homolog of Aspergillus oryzae (strain ATCC 42149 / RIB 40) (Yellow koji mold).